Reading from the N-terminus, the 1396-residue chain is Integrin alpha-PS2 (1396 aa).

The first 31 residues, 1–31 (MSGDSIHRRRMALHCPITSLILLLIAMSAHG), serve as a signal peptide directing secretion. Over 32–1341 (YNIDLPSYVR…EPEPLQVPDV (1310 aa)) the chain is Extracellular. 7 FG-GAP repeats span residues 36-106 (LPSY…DCKL), 117-174 (NVDK…FTSH), 186-239 (RTNN…FPFK), 266-317 (STSE…RWNM), 318-383 (ANIF…TEEK), 386-445 (TTEH…GPLA), and 452-514 (KSEQ…FASN). The N-linked (GlcNAc...) asparagine glycan is linked to asparagine 69. The N-linked (GlcNAc...) asparagine glycan is linked to asparagine 209. The N-linked (GlcNAc...) asparagine glycan is linked to asparagine 322. Residues asparagine 584, asparagine 598, asparagine 741, asparagine 783, asparagine 833, and asparagine 959 are each glycosylated (N-linked (GlcNAc...) asparagine). Disordered regions lie at residues 960–1107 (STDA…LGTL) and 1159–1246 (PGFQ…KPLQ). Basic and acidic residues predominate over residues 963–979 (AGDKLSPKQVEQRRQED). Residues 997–1006 (QAVQEPQVNQ) show a composition bias toward polar residues. An N-linked (GlcNAc...) asparagine glycan is attached at asparagine 1005. Composition is skewed to low complexity over residues 1007–1021 (TSFT…SSGS) and 1060–1071 (QQQQQHQQLLLA). The segment covering 1082–1099 (VTFNDKSQFGGRNNNFHT) has biased composition (polar residues). Composition is skewed to low complexity over residues 1162–1182 (QGQT…GYQT) and 1217–1226 (SSSSSSSSSS). Residues asparagine 1299 and asparagine 1307 are each glycosylated (N-linked (GlcNAc...) asparagine). Residues 1342–1366 (VPLWVVVLAACAGALIFLLLVWLLY) form a helical membrane-spanning segment. Over 1367–1396 (KCGFFNRNRPTDHSQERQPLRNGYHGDEHL) the chain is Cytoplasmic. The interval 1377–1396 (TDHSQERQPLRNGYHGDEHL) is disordered.

It belongs to the integrin alpha chain family. In terms of assembly, heterodimer of an alpha and a beta subunit. The alpha subunit is composed of a heavy and a light chain linked by a disulfide bond. Alpha-PS2 associates with beta-PS. The heavy-light chain cleavage site is either in 1230-1231, or 1233-1234, or 1243-1244. In ovaries, highly expressed in follicle cells. At syncytial blastoderm stage, expressed in the embryonic mesodermal precursors but not in the ectoderm. At embryonic stages 7 and 10, expression is restricted to the mesoderm. At stage 12, expressed in the gonadal sheath and the interstitial cells of the gonad. In stage 16 embryos, expressed in the somatic and visceral muscles where localizes to sites of attachment between adjacent muscles. In third larval instar wing imaginal disk, expressed in the ventral compartment and in a subset of adepithelial and peripodial cells (at protein level).

The protein localises to the apical cell membrane. The protein resides in the lateral cell membrane. Its subcellular location is the basal cell membrane. Its function is as follows. Alpha-PS2/beta-PS is a receptor for Tig, wb and Ten-m. Involved in the function and/or development of the olfactory system. This Drosophila melanogaster (Fruit fly) protein is Integrin alpha-PS2 (if).